The sequence spans 291 residues: Light-independent protochlorophyllide reductase iron-sulfur ATP-binding protein (291 aa).

ATP is bound by residues 10-15 (GIGKST) and lysine 39. Residue serine 14 participates in Mg(2+) binding. Residues cysteine 95 and cysteine 129 each coordinate [4Fe-4S] cluster. An ATP-binding site is contributed by 180-181 (NR).

This sequence belongs to the NifH/BchL/ChlL family. In terms of assembly, homodimer. Protochlorophyllide reductase is composed of three subunits; ChlL, ChlN and ChlB. [4Fe-4S] cluster serves as cofactor.

It localises to the plastid. The protein localises to the chloroplast. The enzyme catalyses chlorophyllide a + oxidized 2[4Fe-4S]-[ferredoxin] + 2 ADP + 2 phosphate = protochlorophyllide a + reduced 2[4Fe-4S]-[ferredoxin] + 2 ATP + 2 H2O. It functions in the pathway porphyrin-containing compound metabolism; chlorophyll biosynthesis (light-independent). Component of the dark-operative protochlorophyllide reductase (DPOR) that uses Mg-ATP and reduced ferredoxin to reduce ring D of protochlorophyllide (Pchlide) to form chlorophyllide a (Chlide). This reaction is light-independent. The L component serves as a unique electron donor to the NB-component of the complex, and binds Mg-ATP. In Pinus contorta (Shore pine), this protein is Light-independent protochlorophyllide reductase iron-sulfur ATP-binding protein.